Here is a 576-residue protein sequence, read N- to C-terminus: Quinone-reactive Ni/Fe-hydrogenase large chain (576 aa).

Residues Cys-62, Cys-65, Cys-547, and Cys-550 each coordinate Ni(2+).

It belongs to the [NiFe]/[NiFeSe] hydrogenase large subunit family. As to quaternary structure, heterodimer of a large and a small subunit. The cofactor is Ni(2+).

It localises to the cell membrane. It catalyses the reaction H2 + a menaquinone = a menaquinol. This enzyme recycles the H(2) produced by nitrogenase to increase the production of ATP and to protect nitrogenase against inhibition or damage by O(2) under carbon- or phosphate-limited conditions. The chain is Quinone-reactive Ni/Fe-hydrogenase large chain (hydB) from Wolinella succinogenes (strain ATCC 29543 / DSM 1740 / CCUG 13145 / JCM 31913 / LMG 7466 / NCTC 11488 / FDC 602W) (Vibrio succinogenes).